Consider the following 314-residue polypeptide: Melanoma-associated antigen 12 (314 aa).

Basic and acidic residues predominate over residues 1-14 (MPLEQRSQHCKPEE). A disordered region spans residues 1–72 (MPLEQRSQHC…HSPQGASTLP (72 aa)). The span at 17 to 44 (EAQGEALGLVGAQAPATEEQETASSSST) shows a compositional bias: low complexity. The 200-residue stretch at 109–308 (LSRKMAELVH…ISYPPLHEWA (200 aa)) folds into the MAGE domain.

In terms of tissue distribution, expressed in many tumors of several types, such as melanoma, head and neck squamous cell carcinoma, lung carcinoma and breast carcinoma, but not in normal tissues except for testes.

Its function is as follows. Not known, though may play a role tumor transformation or progression. In vitro promotes cell viability in melanoma cell lines. This Homo sapiens (Human) protein is Melanoma-associated antigen 12 (MAGEA12).